We begin with the raw amino-acid sequence, 309 residues long: Mitochondrial import receptor subunit TOM34 (309 aa).

TPR repeat units lie at residues 9 to 42 (VEEL…LQAQ), 51 to 84 (SVLY…VPFS), and 86 to 118 (KPLL…DDSV). At S160 the chain carries Phosphoserine. The disordered stretch occupies residues 161 to 189 (LPSENHKEMAKSKSKETTATKNRVPSAGD). The segment covering 164–178 (ENHKEMAKSKSKETT) has biased composition (basic and acidic residues). Residue S186 is modified to Phosphoserine. TPR repeat units follow at residues 193–226 (AKVL…SNLE), 227–260 (SATY…DGKN), and 262–294 (KAFY…EPRN). A Glycyl lysine isopeptide (Lys-Gly) (interchain with G-Cter in SUMO2) cross-link involves residue K197.

The protein belongs to the Tom34 family. Interacts with HSP90A, VCP, ATP6V1D, KIAA0665, AMPK, and DMAP1 through its TPR repeat.

It is found in the cytoplasm. It localises to the mitochondrion outer membrane. Functionally, plays a role in the import of cytosolically synthesized preproteins into mitochondria. Binds the mature portion of precursor proteins. Interacts with cellular components, and possesses weak ATPase activity. May be a chaperone-like protein that helps to keep newly synthesized precursors in an unfolded import compatible state. The polypeptide is Mitochondrial import receptor subunit TOM34 (TOMM34) (Pongo abelii (Sumatran orangutan)).